The sequence spans 275 residues: Methylthioribulose-1-phosphate dehydratase (275 aa).

Cys-125 lines the substrate pocket. Zn(2+)-binding residues include His-143 and His-145. The active-site Proton donor/acceptor is Glu-168. Zn(2+) is bound at residue His-233.

It belongs to the aldolase class II family. MtnB subfamily. The cofactor is Zn(2+).

It localises to the cytoplasm. The catalysed reaction is 5-(methylsulfanyl)-D-ribulose 1-phosphate = 5-methylsulfanyl-2,3-dioxopentyl phosphate + H2O. It functions in the pathway amino-acid biosynthesis; L-methionine biosynthesis via salvage pathway; L-methionine from S-methyl-5-thio-alpha-D-ribose 1-phosphate: step 2/6. Catalyzes the dehydration of methylthioribulose-1-phosphate (MTRu-1-P) into 2,3-diketo-5-methylthiopentyl-1-phosphate (DK-MTP-1-P). The sequence is that of Methylthioribulose-1-phosphate dehydratase from Lodderomyces elongisporus (strain ATCC 11503 / CBS 2605 / JCM 1781 / NBRC 1676 / NRRL YB-4239) (Yeast).